We begin with the raw amino-acid sequence, 136 residues long: Peptide methionine sulfoxide reductase MsrB (136 aa).

Residues 9 to 136 enclose the MsrB domain; sequence DAEWKALLAE…NSASLDFKKK (128 aa). Cys53, Cys56, Cys102, and Cys105 together coordinate Zn(2+). The Nucleophile role is filled by Cys125.

It belongs to the MsrB Met sulfoxide reductase family. Zn(2+) is required as a cofactor.

It carries out the reaction L-methionyl-[protein] + [thioredoxin]-disulfide + H2O = L-methionyl-(R)-S-oxide-[protein] + [thioredoxin]-dithiol. The chain is Peptide methionine sulfoxide reductase MsrB from Variovorax paradoxus (strain S110).